Here is a 272-residue protein sequence, read N- to C-terminus: Hemin import ATP-binding protein HmuV (272 aa).

The 254-residue stretch at 2 to 255 (LNAEHLHVAR…DLIERCYGFR (254 aa)) folds into the ABC transporter domain. 34-41 (GRNGAGKS) serves as a coordination point for ATP.

It belongs to the ABC transporter superfamily. Heme (hemin) importer (TC 3.A.1.14.5) family. As to quaternary structure, the complex is composed of two ATP-binding proteins (HmuV), two transmembrane proteins (HmuU) and a solute-binding protein (HmuT).

The protein resides in the cell inner membrane. Functionally, part of the ABC transporter complex HmuTUV involved in hemin import. Responsible for energy coupling to the transport system. In Burkholderia thailandensis (strain ATCC 700388 / DSM 13276 / CCUG 48851 / CIP 106301 / E264), this protein is Hemin import ATP-binding protein HmuV.